The primary structure comprises 259 residues: Ribosome maturation factor RimP (259 aa).

The segment covering 186-195 has biased composition (basic and acidic residues); sequence RGKQAERELK. Residues 186–259 form a disordered region; the sequence is RGKQAERELK…RGDTDLSEGD (74 aa). Basic residues predominate over residues 239–248; the sequence is KQHRLAAGRS.

The protein belongs to the RimP family.

The protein resides in the cytoplasm. In terms of biological role, required for maturation of 30S ribosomal subunits. The protein is Ribosome maturation factor RimP of Rhodopseudomonas palustris (strain HaA2).